The following is a 798-amino-acid chain: Shutoff protein (798 aa).

Residues M1–E14 show a composition bias toward basic and acidic residues. The tract at residues M1–C123 is disordered. A compositionally biased stretch (acidic residues) spans A33–D49. Over residues G68 to R80 the composition is skewed to basic and acidic residues. Residues D86 to S105 show a composition bias toward polar residues. The tract at residues L309–A376 is binding to host EIF4G. An RRM domain is found at S379–E497. Y711 carries the phosphotyrosine; by host modification. The interval Y740–T798 is disordered. The span at N789–T798 shows a compositional bias: polar residues.

This sequence belongs to the adenoviridae shutoff protein family. In terms of assembly, monomer. Interacts with hexon protein; this interaction allows chaperoning and trimerization of hexon proteins. Interacts (via N-terminus) with host initiation factor EIF4G (via C-terminus). Interacts (via RRM domain) with viral mRNAs that contain the tripartite leader; this interaction allows ribosome shunting and expression of viral late mRNAs. In terms of processing, might be cleaved by the viral protease. Phosphorylated. Tyrosine phosphorylation enhances preferential binding to tripartite leader mRNAs and allows ribosome shunting. Post-translationally, methylated. Asymmetric dimethylation by host PRMT1 of the Arg/Gly-rich region may regulate shutoff protein binding to hexon and promote the capsid assembly in the nucleus.

The protein resides in the host cytoplasm. Protein that inhibits host translation while promoting late viral translation by ribosome shunting. Blocks host cap-dependent translation by binding to eIF4G, displacing MKNK1 from cap initiation complexes and preventing EIF4E phosphorylation. Binds to the tripartite leader sequence of viral late mRNAs and recruits host eIF4G, PABPC1/poly-A binding protein and 40S ribosomes subunits on viral mRNAs, allowing ribosome shunting and efficient translation of late viral mRNAs even though conventional translation via ribosome scanning from the cap has been shut off in the host cell. During assembly, acts as a chaperone protein that helps hexon proteins assembly into trimers. This chain is Shutoff protein, found in Galliformes (FAdV-10).